The following is a 247-amino-acid chain: uncharacterized protein (247 aa).

One can recognise an HTH merR-type domain in the interval 11-85 (GMSIGAVLDL…LKVIRAQLDA (75 aa)). A DNA-binding region (H-T-H motif) is located at residues 14–38 (IGAVLDLLRPDFPDVTISKIRFLEA).

As to quaternary structure, homodimer.

In terms of biological role, transcriptional regulator that binds to its own promoter and thus may play a role in the regulation of the cotranscribed genes Rv1827 and Rv1828. Can also bind several promoter regions of genes that are essential, including ftsZ. Binds to the imperfect everted repeat sequence CTCAA through its winged-HTH motif. This is an uncharacterized protein from Mycobacterium tuberculosis (strain ATCC 25618 / H37Rv).